Reading from the N-terminus, the 129-residue chain is Small ribosomal subunit protein uS11 (129 aa).

Belongs to the universal ribosomal protein uS11 family. As to quaternary structure, part of the 30S ribosomal subunit. Interacts with proteins S7 and S18. Binds to IF-3.

In terms of biological role, located on the platform of the 30S subunit, it bridges several disparate RNA helices of the 16S rRNA. Forms part of the Shine-Dalgarno cleft in the 70S ribosome. The protein is Small ribosomal subunit protein uS11 of Mannheimia succiniciproducens (strain KCTC 0769BP / MBEL55E).